A 312-amino-acid chain; its full sequence is HPr kinase/phosphorylase (312 aa).

Active-site residues include His139 and Lys160. Position 154-161 (154-161 (GSSGVGKS)) interacts with ATP. Position 161 (Ser161) interacts with Mg(2+). Residue Asp178 is the Proton acceptor; for phosphorylation activity. Proton donor; for dephosphorylation activity of the active site. The interval 202–211 (LEIRGLGIIN) is important for the catalytic mechanism of both phosphorylation and dephosphorylation. Residue Glu203 coordinates Mg(2+). Arg244 is a catalytic residue. The segment at 265–270 (PVRPGR) is important for the catalytic mechanism of dephosphorylation.

It belongs to the HPrK/P family. Homohexamer. Mg(2+) is required as a cofactor.

It catalyses the reaction [HPr protein]-L-serine + ATP = [HPr protein]-O-phospho-L-serine + ADP + H(+). The enzyme catalyses [HPr protein]-O-phospho-L-serine + phosphate + H(+) = [HPr protein]-L-serine + diphosphate. In terms of biological role, catalyzes the ATP- as well as the pyrophosphate-dependent phosphorylation of a specific serine residue in HPr, a phosphocarrier protein of the phosphoenolpyruvate-dependent sugar phosphotransferase system (PTS). HprK/P also catalyzes the pyrophosphate-producing, inorganic phosphate-dependent dephosphorylation (phosphorolysis) of seryl-phosphorylated HPr (P-Ser-HPr). The two antagonistic activities of HprK/P are regulated by several intracellular metabolites, which change their concentration in response to the absence or presence of rapidly metabolisable carbon sources (glucose, fructose, etc.) in the growth medium. Therefore, by controlling the phosphorylation state of HPr, HPrK/P is a sensor enzyme that plays a major role in the regulation of carbon metabolism and sugar transport: it mediates carbon catabolite repression (CCR), and regulates PTS-catalyzed carbohydrate uptake and inducer exclusion. This Listeria welshimeri serovar 6b (strain ATCC 35897 / DSM 20650 / CCUG 15529 / CIP 8149 / NCTC 11857 / SLCC 5334 / V8) protein is HPr kinase/phosphorylase.